Here is an 839-residue protein sequence, read N- to C-terminus: Oligopeptide transporter phomP2 (839 aa).

Residues 1–58 (MEADPKVPFTDEMNIQDEHNWESGSWSSSRRSNDSNVTLLSRRSSVEQHEDERQKDSD) form a disordered region. Positions 23–36 (SGSWSSSRRSNDSN) are enriched in low complexity. Asn-33 and Asn-36 each carry an N-linked (GlcNAc...) asparagine glycan. Residues 44–58 (SSVEQHEDERQKDSD) show a composition bias toward basic and acidic residues. 6 helical membrane-spanning segments follow: residues 105-125 (VWLL…VYYF), 177-197 (ALVV…GPLS), 210-230 (PWAI…VGLY), 268-288 (VFMA…FVFP), 315-335 (GFGL…SPLF), and 345-365 (FVGA…SDAL). N-linked (GlcNAc...) asparagine glycosylation is found at Asn-386 and Asn-398. The next 4 membrane-spanning stretches (helical) occupy residues 415 to 435 (AMHF…AVLF), 478 to 498 (AWYA…LYAG), 505 to 525 (WGLQ…GMLF), and 585 to 605 (WELL…NWAV). Gly residues predominate over residues 629–646 (QGLGLGQGGGGGGGGGGQ). Residues 629–654 (QGLGLGQGGGGGGGGGGQQQRAAGAH) are disordered. The next 3 membrane-spanning stretches (helical) occupy residues 665-685 (NFFS…FGGG), 697-717 (WLLP…WLIH), and 728-748 (WPLH…FPTT). N-linked (GlcNAc...) asparagine glycosylation occurs at Asn-749. Residues 781 to 801 (AGLDCGAQLVQMVLGVAFLVF) traverse the membrane as a helical segment.

Belongs to the oligopeptide OPT transporter family.

It localises to the membrane. Oligopeptide transporter; part of the gene cluster that mediates the biosynthesis of the phomopsins, a group of hexapeptide mycotoxins which infects lupins and causes lupinosis disease in livestock. This chain is Oligopeptide transporter phomP2, found in Diaporthe leptostromiformis (Lupinosis disease fungus).